The following is a 244-amino-acid chain: uncharacterized protein (244 aa).

The next 6 helical transmembrane spans lie at 21-41, 44-64, 66-86, 139-159, 165-185, and 199-219; these read FPYS…YGIY, ALGF…AGSV, FIAA…LITL, WYMF…AAMG, VLPF…LVIF, and LLGL…YFLI.

The protein belongs to the AzlC family.

Its subcellular location is the cell membrane. This is an uncharacterized protein from Haemophilus influenzae (strain ATCC 51907 / DSM 11121 / KW20 / Rd).